A 317-amino-acid polypeptide reads, in one-letter code: Acetyl-coenzyme A carboxylase carboxyl transferase subunit alpha (317 aa).

The CoA carboxyltransferase C-terminal domain maps to 39–293; sequence RLESKAAAAL…EEAIAEGLAG (255 aa).

Belongs to the AccA family. In terms of assembly, acetyl-CoA carboxylase is a heterohexamer composed of biotin carboxyl carrier protein (AccB), biotin carboxylase (AccC) and two subunits each of ACCase subunit alpha (AccA) and ACCase subunit beta (AccD).

It is found in the cytoplasm. The catalysed reaction is N(6)-carboxybiotinyl-L-lysyl-[protein] + acetyl-CoA = N(6)-biotinyl-L-lysyl-[protein] + malonyl-CoA. It functions in the pathway lipid metabolism; malonyl-CoA biosynthesis; malonyl-CoA from acetyl-CoA: step 1/1. Functionally, component of the acetyl coenzyme A carboxylase (ACC) complex. First, biotin carboxylase catalyzes the carboxylation of biotin on its carrier protein (BCCP) and then the CO(2) group is transferred by the carboxyltransferase to acetyl-CoA to form malonyl-CoA. This chain is Acetyl-coenzyme A carboxylase carboxyl transferase subunit alpha, found in Methylobacterium sp. (strain 4-46).